A 193-amino-acid polypeptide reads, in one-letter code: Probable chorismate pyruvate-lyase (193 aa).

Residues R81, L119, and E177 each contribute to the substrate site.

This sequence belongs to the UbiC family.

Its subcellular location is the cytoplasm. The enzyme catalyses chorismate = 4-hydroxybenzoate + pyruvate. It participates in cofactor biosynthesis; ubiquinone biosynthesis. Functionally, removes the pyruvyl group from chorismate, with concomitant aromatization of the ring, to provide 4-hydroxybenzoate (4HB) for the ubiquinone pathway. The sequence is that of Probable chorismate pyruvate-lyase from Idiomarina loihiensis (strain ATCC BAA-735 / DSM 15497 / L2-TR).